Consider the following 375-residue polypeptide: MIKIGSALLVDQGSGLVRTGWLKALAEDIAQLRAEGREVLIVSSGAIAVGRRSLHLEPGRMRLDEKQAAAAAGQIELAHAYRTVMADHAINVAQLLLTLDDSENRRRYLNARNCLETLLRLGVIPVINENDTVTTQEIRFGDNDRLAARVAQMACADALILLSDIDGLYTADPHRDPEARFIPTVTALTPEIAAMAGAALTPHGTGGMVTKLLAARICMDAGCAMAIAPGKDDHALRLLRQGGRQTWFLPAEEPRTARKAWISGALKAEGTLWVDDGAARALAAGSSLLPPGVRTVEGDFQRGAAVRVVGLDGSPLAKGLIAYPSDEARLLVGHRSGDIEALLGYRGREELIHRDDLVLDSRFRHRDEDGEGHRS.

Lys3 is an ATP binding site. Ser44, Asp131, and Asn143 together coordinate substrate. Residues 163 to 164 (SD) and 205 to 211 (TGGMVTK) contribute to the ATP site. Residues 269–346 (EGTLWVDDGA…GDIEALLGYR (78 aa)) form the PUA domain.

It belongs to the glutamate 5-kinase family.

The protein resides in the cytoplasm. It catalyses the reaction L-glutamate + ATP = L-glutamyl 5-phosphate + ADP. Its pathway is amino-acid biosynthesis; L-proline biosynthesis; L-glutamate 5-semialdehyde from L-glutamate: step 1/2. In terms of biological role, catalyzes the transfer of a phosphate group to glutamate to form L-glutamate 5-phosphate. This chain is Glutamate 5-kinase, found in Rhodospirillum rubrum (strain ATCC 11170 / ATH 1.1.1 / DSM 467 / LMG 4362 / NCIMB 8255 / S1).